The following is a 337-amino-acid chain: Inositol 2-dehydrogenase (337 aa).

Belongs to the Gfo/Idh/MocA family. Homotetramer.

It catalyses the reaction myo-inositol + NAD(+) = scyllo-inosose + NADH + H(+). In terms of biological role, involved in the oxidation of myo-inositol (MI) to 2-keto-myo-inositol (2KMI or 2-inosose). In Burkholderia vietnamiensis (strain G4 / LMG 22486) (Burkholderia cepacia (strain R1808)), this protein is Inositol 2-dehydrogenase.